A 75-amino-acid polypeptide reads, in one-letter code: Calhepatin (75 aa).

Ser1 carries the N-acetylserine modification. EF-hand domains are found at residues 2–37 and 38–73; these read ADEQKLRERFEALDKDKSGTLSVDELYEGVHAVHPK and VSRNDIVKIIEKVDTNKDGQVSWQEFIEAFKRLADL. Positions 15, 17, 19, 21, 26, 51, 53, 55, 57, and 62 each coordinate Ca(2+).

Monomer and homodimer. Liver, and to a much lower level intestine.

Functionally, binds both calcium and copper, but not zinc. May be involved in calcium signal transduction. The sequence is that of Calhepatin from Lepidosiren paradoxus (South American lungfish).